The chain runs to 607 residues: Probable LRR receptor-like serine/threonine-protein kinase At5g65240 (607 aa).

The signal sequence occupies residues 1 to 24; sequence MALLIITALVFSSLWSSVSPDAQG. Over 25–219 the chain is Extracellular; that stretch reads DALFALRSSL…SGDSSSRKTG (195 aa). 2 N-linked (GlcNAc...) asparagine glycosylation sites follow: Asn74 and Asn110. LRR repeat units lie at residues 87–111, 112–135, 137–159, and 160–183; these read LTTLKTLTLKGNGIMGGIPESIGNL, SSLTSLDLEDNHLTDRIPSTLGNL, NLQFLTLSRNNLNGSIPDSLTGL, and SKLINILLDSNNLSGEIPQSLFKI. N-linked (GlcNAc...) asparagine glycans are attached at residues Asn149, Asn171, Asn187, and Asn192. The helical transmembrane segment at 220–240 threads the bilayer; it reads IIAGVVSGIAVILLGFFFFFF. Residues 241 to 607 are Cytoplasmic-facing; sequence CKDKHKGYKR…QDAIELSGGR (367 aa). Thr281 is modified (phosphothreonine). Residues 284-568 enclose the Protein kinase domain; that stretch reads FSEKNVLGQG…EGEGLAERWE (285 aa). An ATP-binding site is contributed by 290–298; the sequence is LGQGGFGKV. At Thr307 the chain carries Phosphothreonine. Lys312 contacts ATP. Ser365 carries the post-translational modification Phosphoserine. Asp411 serves as the catalytic Proton acceptor. Thr444, Thr445, and Thr450 each carry phosphothreonine. Phosphoserine is present on Ser460. A Phosphothreonine modification is found at Thr461. At Ser465 the chain carries Phosphoserine. At Thr541 the chain carries Phosphothreonine.

The protein belongs to the protein kinase superfamily. Ser/Thr protein kinase family.

Its subcellular location is the cell membrane. The catalysed reaction is L-seryl-[protein] + ATP = O-phospho-L-seryl-[protein] + ADP + H(+). It carries out the reaction L-threonyl-[protein] + ATP = O-phospho-L-threonyl-[protein] + ADP + H(+). The protein is Probable LRR receptor-like serine/threonine-protein kinase At5g65240 of Arabidopsis thaliana (Mouse-ear cress).